We begin with the raw amino-acid sequence, 284 residues long: Probable O-methyltransferase ustE (284 aa).

N-linked (GlcNAc...) asparagine glycosylation is found at asparagine 22 and asparagine 29. 2 helical membrane-spanning segments follow: residues 88–108 and 157–177; these read LLLL…VLTV and YLAT…VCEI. N-linked (GlcNAc...) asparagine glycosylation occurs at asparagine 205. A helical membrane pass occupies residues 215 to 235; that stretch reads GLALASGGMIYGMSIAMFFMW. Asparagine 264 is a glycosylation site (N-linked (GlcNAc...) asparagine).

It belongs to the class VI-like SAM-binding methyltransferase superfamily. Isoprenylcysteine carboxyl methyltransferase family.

It localises to the membrane. Its pathway is secondary metabolite biosynthesis. Functionally, probable O-methyltransferase; part of the gene cluster that mediates the biosynthesis of ustilaginoidins, dimeric gamma-naphthopyrones isolated from different fungal species. The first step in the biosynthesis of ustilaginoidins is the production of gamma-naphthopyrone precursor YWA1 by the non-reducing polyketide synthase ustP, via condensation of one acetyl-CoA starter unit with 6 malonyl-CoA units. YWA1 is then probably substrate of the ustZ to yield norrubrofusarin via a dehydration reaction. A key enzyme in the biosynthetic pathway is the laccase ustL, which catalyzes the oxidative dimerization of norrubrofusarin to ustilaginoidin A. It can produce the M- and P-atropisomers in varying amounts, depending on the reaction conditions. For the biosynthesis of 3-methylustilaginoid in derivatives such as chaetochromin A, a methylated derivative of YWA1 is required. The C-methylation is considered to be catalyzed by ustM, the phosphopantetheine attachment site of which indicates that it acts on the growing polyketide chain before release of the product. For the biosynthesis of chaetochromin A, it is assumed that saturation of the D2 double bond takes place before dimerization, and is probably catalyzed by an external reductase because no candidate gene was identified within the cluster. The protein is Probable O-methyltransferase ustE of Ustilaginoidea virens (Rice false smut fungus).